The sequence spans 546 residues: 2-isopropylmalate synthase (546 aa).

Residues 8-271 enclose the Pyruvate carboxyltransferase domain; it reads ILIFDTTLRD…NSFFKRNPDS (264 aa). 4 residues coordinate Mn(2+): Asp17, His208, His210, and Asn244. The regulatory domain stretch occupies residues 408-546; it reads QLSLVQVSCG…NNTYISNPAN (139 aa).

Belongs to the alpha-IPM synthase/homocitrate synthase family. LeuA type 1 subfamily. Homodimer. Mn(2+) is required as a cofactor.

The protein resides in the cytoplasm. It carries out the reaction 3-methyl-2-oxobutanoate + acetyl-CoA + H2O = (2S)-2-isopropylmalate + CoA + H(+). The protein operates within amino-acid biosynthesis; L-leucine biosynthesis; L-leucine from 3-methyl-2-oxobutanoate: step 1/4. Its function is as follows. Catalyzes the condensation of the acetyl group of acetyl-CoA with 3-methyl-2-oxobutanoate (2-ketoisovalerate) to form 3-carboxy-3-hydroxy-4-methylpentanoate (2-isopropylmalate). In Prochlorococcus marinus (strain MIT 9301), this protein is 2-isopropylmalate synthase.